Reading from the N-terminus, the 279-residue chain is Vitamin B12-binding protein (279 aa).

Residues 1 to 20 form the signal peptide; that stretch reads MTFRFLCWLTGLLLCTAAYA. A Fe/B12 periplasmic-binding domain is found at 24–276; sequence RVISLAPHAT…QLAELKLAPS (253 aa). The cysteines at positions 189 and 265 are disulfide-linked.

It belongs to the BtuF family. In terms of assembly, the complex is composed of two ATP-binding proteins (BtuD), two transmembrane proteins (BtuC) and a solute-binding protein (BtuF).

The protein localises to the periplasm. Functionally, part of the ABC transporter complex BtuCDF involved in vitamin B12 import. Binds vitamin B12 and delivers it to the periplasmic surface of BtuC. The polypeptide is Vitamin B12-binding protein (Pectobacterium atrosepticum (strain SCRI 1043 / ATCC BAA-672) (Erwinia carotovora subsp. atroseptica)).